The primary structure comprises 377 residues: Chaperone protein DnaJ (377 aa).

Positions 4 to 69 (DYYEALGVER…QKRAAYDRFG (66 aa)) constitute a J domain. Residues 135–213 (GKTAQIRVPT…CHGQGRVTQE (79 aa)) form a CR-type zinc finger. Zn(2+) contacts are provided by C148, C151, C165, C168, C187, C190, C201, and C204. CXXCXGXG motif repeat units lie at residues 148 to 155 (CDECSGSG), 165 to 172 (CTMCSGSG), 187 to 194 (CPTCNGRG), and 201 to 208 (CGKCHGQG).

It belongs to the DnaJ family. As to quaternary structure, homodimer. It depends on Zn(2+) as a cofactor.

It is found in the cytoplasm. Participates actively in the response to hyperosmotic and heat shock by preventing the aggregation of stress-denatured proteins and by disaggregating proteins, also in an autonomous, DnaK-independent fashion. Unfolded proteins bind initially to DnaJ; upon interaction with the DnaJ-bound protein, DnaK hydrolyzes its bound ATP, resulting in the formation of a stable complex. GrpE releases ADP from DnaK; ATP binding to DnaK triggers the release of the substrate protein, thus completing the reaction cycle. Several rounds of ATP-dependent interactions between DnaJ, DnaK and GrpE are required for fully efficient folding. Also involved, together with DnaK and GrpE, in the DNA replication of plasmids through activation of initiation proteins. The chain is Chaperone protein DnaJ from Brucella anthropi (strain ATCC 49188 / DSM 6882 / CCUG 24695 / JCM 21032 / LMG 3331 / NBRC 15819 / NCTC 12168 / Alc 37) (Ochrobactrum anthropi).